A 92-amino-acid chain; its full sequence is Small ribosomal subunit protein uS19c (92 aa).

It belongs to the universal ribosomal protein uS19 family.

The protein resides in the plastid. The protein localises to the chloroplast. In terms of biological role, protein S19 forms a complex with S13 that binds strongly to the 16S ribosomal RNA. This chain is Small ribosomal subunit protein uS19c, found in Guizotia abyssinica (Niger).